We begin with the raw amino-acid sequence, 710 residues long: Prolyl endopeptidase (710 aa).

Methionine 1 is subject to N-acetylmethionine. Lysine 157 carries the post-translational modification N6-acetyllysine. Residues serine 554, aspartate 641, and histidine 680 each act as charge relay system in the active site.

It belongs to the peptidase S9A family. Monomer. Post-translationally, the N-terminus is blocked.

The protein localises to the cytoplasm. The catalysed reaction is Hydrolysis of Pro-|-Xaa &gt;&gt; Ala-|-Xaa in oligopeptides.. In terms of biological role, cleaves peptide bonds on the C-terminal side of prolyl residues within peptides that are up to approximately 30 amino acids long. The polypeptide is Prolyl endopeptidase (PREP) (Homo sapiens (Human)).